The following is a 285-amino-acid chain: RNA exonuclease 4 (285 aa).

Positions 1–14 (MAKLSQNWKKLSSK) are enriched in polar residues. Residues 1-35 (MAKLSQNWKKLSSKIQDKPKNGSVKKPTLKGKISK) are disordered. Residues 116 to 267 (YVAIDCEFVG…EDARATMLLF (152 aa)) enclose the Exonuclease domain.

It belongs to the REXO4 family.

The protein resides in the nucleus. In terms of biological role, exoribonuclease involved in ribosome biosynthesis. Involved in the processing of ITS1, the internal transcribed spacer localized between the 18S and 5.8S rRNAs. The sequence is that of RNA exonuclease 4 (REX4) from Candida albicans (strain SC5314 / ATCC MYA-2876) (Yeast).